A 234-amino-acid polypeptide reads, in one-letter code: Peptidase E (234 aa).

Catalysis depends on charge relay system residues serine 120, aspartate 135, and histidine 157.

It belongs to the peptidase S51 family.

It localises to the cytoplasm. The catalysed reaction is Dipeptidase E catalyzes the hydrolysis of dipeptides Asp-|-Xaa. It does not act on peptides with N-terminal Glu, Asn or Gln, nor does it cleave isoaspartyl peptides.. In terms of biological role, hydrolyzes dipeptides containing N-terminal aspartate residues. May play a role in allowing the cell to use peptide aspartate to spare carbon otherwise required for the synthesis of the aspartate family of amino acids. In Salmonella gallinarum (strain 287/91 / NCTC 13346), this protein is Peptidase E.